Here is a 582-residue protein sequence, read N- to C-terminus: Threonine--tRNA ligase (582 aa).

The tract at residues 185–478 (DHRKLGKELE…LTEQYGGAFP (294 aa)) is catalytic. Positions 278, 329, and 455 each coordinate Zn(2+).

It belongs to the class-II aminoacyl-tRNA synthetase family. In terms of assembly, homodimer. It depends on Zn(2+) as a cofactor.

The protein resides in the cytoplasm. It carries out the reaction tRNA(Thr) + L-threonine + ATP = L-threonyl-tRNA(Thr) + AMP + diphosphate + H(+). Its function is as follows. Catalyzes the attachment of threonine to tRNA(Thr) in a two-step reaction: L-threonine is first activated by ATP to form Thr-AMP and then transferred to the acceptor end of tRNA(Thr). Also edits incorrectly charged L-seryl-tRNA(Thr). The sequence is that of Threonine--tRNA ligase from Dehalococcoides mccartyi (strain CBDB1).